The following is a 1249-amino-acid chain: Minor capsid protein M1249L (1249 aa).

The protein belongs to the asfivirus M1249L family. Interacts with the minor capsid protein p17 and with the hexon capsid protein p72 capsomers; these interactions form a rigid zipper structure that stabilizes the capsomers. Interacts with host IRF3.

Its subcellular location is the virion. It is found in the host cytoplasm. Together with the penton and the other minor capsid proteins (p17, p49), forms a complicated network immediately below the outer capsid shell, stabilizing the whole capsid. In addition, blocks IFN-beta transactivation mediated by the cGAS-STING pathway and regulates the transcriptional activity of IFN-beta. Mechanistically, suppresses the phosphorylation of host key adapter protein TBK1 and degrades host IRF3 in the cytoplasm. The polypeptide is Minor capsid protein M1249L (African swine fever virus (isolate Tick/Malawi/Lil 20-1/1983) (ASFV)).